Reading from the N-terminus, the 1437-residue chain is FYVE and coiled-coil domain-containing protein 1 (1437 aa).

At Ala-2 the chain carries N-acetylalanine. Positions 4–30 (SSTETQLQRIIRDLQDAATELSHEFKE) form a coiled coil. The RUN domain occupies 36–169 (TDDSTSLHKF…VQFDLAPRGY (134 aa)). Ser-196 carries the phosphoserine modification. 3 coiled-coil regions span residues 223-270 (SLNN…VSRQ), 305-846 (SQAT…SEGA), and 873-1110 (ALTA…KDAL). Thr-372 carries the phosphothreonine modification. The residue at position 837 (Ser-837) is a Phosphoserine. The segment at 1132 to 1190 (DMEVNHCHDCKREFSWIVRRHHCRICGRIFCYYCCNNYVVTKPSGKKERCCRACFQKFG) adopts an FYVE-type zinc-finger fold. The Zn(2+) site is built by Cys-1138, Cys-1141, Cys-1154, Cys-1157, Cys-1162, Cys-1165, Cys-1182, and Cys-1185. Disordered regions lie at residues 1191 to 1227 (EGSGSNDSSGSGTSQGEPSPMVSPAEASPQSIGSQGI) and 1253 to 1289 (SGSSLPETPTETDSMDPNTAEQDTTSNSLTPEDTEDV). Residues 1194 to 1206 (GSNDSSGSGTSQG) are compositionally biased toward low complexity. Polar residues-rich tracts occupy residues 1218–1227 (SPQSIGSQGI) and 1253–1283 (SGSSLPETPTETDSMDPNTAEQDTTSNSLTP). Positions 1296-1425 (EICLLKSGEL…SKKVLYHLTV (130 aa)) constitute a GOLD domain.

In terms of assembly, can form homodimers. Interacts (via C-terminus) with MAP1LC3B. Interacts with RAB7A; the interaction with RAB7A induces FYCO1 recruitment to late endosomal/lysosomal compartments. Expressed in heart and testis. Expressed in the eye lens.

Its subcellular location is the cytoplasmic vesicle. The protein localises to the autophagosome. It localises to the endosome. The protein resides in the lysosome. In terms of biological role, may mediate microtubule plus end-directed vesicle transport. This chain is FYVE and coiled-coil domain-containing protein 1 (Fyco1), found in Mus musculus (Mouse).